The primary structure comprises 146 residues: 3-hydroxyacyl-[acyl-carrier-protein] dehydratase FabZ (146 aa).

The active site involves H48.

Belongs to the thioester dehydratase family. FabZ subfamily.

It is found in the cytoplasm. The enzyme catalyses a (3R)-hydroxyacyl-[ACP] = a (2E)-enoyl-[ACP] + H2O. Involved in unsaturated fatty acids biosynthesis. Catalyzes the dehydration of short chain beta-hydroxyacyl-ACPs and long chain saturated and unsaturated beta-hydroxyacyl-ACPs. The sequence is that of 3-hydroxyacyl-[acyl-carrier-protein] dehydratase FabZ from Campylobacter jejuni subsp. jejuni serotype O:6 (strain 81116 / NCTC 11828).